The following is a 648-amino-acid chain: Bifunctional protein TilS/HprT (648 aa).

29 to 34 (SGGPDS) is an ATP binding site. Position 627 (Asp-627) interacts with Mg(2+).

It in the N-terminal section; belongs to the tRNA(Ile)-lysidine synthase family. This sequence in the C-terminal section; belongs to the purine/pyrimidine phosphoribosyltransferase family. Mg(2+) serves as cofactor.

The protein localises to the cytoplasm. The enzyme catalyses IMP + diphosphate = hypoxanthine + 5-phospho-alpha-D-ribose 1-diphosphate. The catalysed reaction is GMP + diphosphate = guanine + 5-phospho-alpha-D-ribose 1-diphosphate. It catalyses the reaction cytidine(34) in tRNA(Ile2) + L-lysine + ATP = lysidine(34) in tRNA(Ile2) + AMP + diphosphate + H(+). Ligates lysine onto the cytidine present at position 34 of the AUA codon-specific tRNA(Ile) that contains the anticodon CAU, in an ATP-dependent manner. Cytidine is converted to lysidine, thus changing the amino acid specificity of the tRNA from methionine to isoleucine. This Listeria monocytogenes serotype 4b (strain F2365) protein is Bifunctional protein TilS/HprT (tilS/hprT).